The following is a 312-amino-acid chain: Protein-methionine-sulfoxide reductase catalytic subunit MsrP (312 aa).

Positions 1-47 (MLIRRPPDLLPSEITPEPLARGRRALLKGLGAGAALAGLGLPQISQA) form a signal peptide, tat-type signal. Residues Asn-74, 77 to 78 (YE), Cys-133, Thr-168, Asn-216, Arg-221, and 232 to 234 (SAK) each bind Mo-molybdopterin.

It belongs to the MsrP family. As to quaternary structure, heterodimer of a catalytic subunit (MsrP) and a heme-binding subunit (MsrQ). Mo-molybdopterin serves as cofactor. Predicted to be exported by the Tat system. The position of the signal peptide cleavage has not been experimentally proven.

Its subcellular location is the periplasm. It carries out the reaction L-methionyl-[protein] + a quinone + H2O = L-methionyl-(R)-S-oxide-[protein] + a quinol. Functionally, part of the MsrPQ system that repairs oxidized periplasmic proteins containing methionine sulfoxide residues (Met-O), using respiratory chain electrons. Thus protects these proteins from oxidative-stress damage caused by reactive species of oxygen and chlorine generated by the host defense mechanisms. MsrPQ is essential for the maintenance of envelope integrity under bleach stress, rescuing a wide series of structurally unrelated periplasmic proteins from methionine oxidation. The catalytic subunit MsrP is non-stereospecific, being able to reduce both (R-) and (S-) diastereoisomers of methionine sulfoxide. Involved in protection against reactive chlorine species (RCS) generated by chlorite and hypochlorite. The sequence is that of Protein-methionine-sulfoxide reductase catalytic subunit MsrP from Azospira oryzae (strain ATCC BAA-33 / DSM 13638 / PS) (Dechlorosoma suillum).